The following is a 272-amino-acid chain: Shikimate dehydrogenase (NADP(+)) (272 aa).

Residues 14–16 (SKS) and Thr61 each bind shikimate. Lys65 serves as the catalytic Proton acceptor. Glu77 contacts NADP(+). Asn86 and Asp102 together coordinate shikimate. Residues 126-130 (GAGGA), 149-154 (NRTASR), and Met213 contribute to the NADP(+) site. A shikimate-binding site is contributed by Tyr215. Residue Gly237 participates in NADP(+) binding.

Belongs to the shikimate dehydrogenase family. As to quaternary structure, homodimer.

The catalysed reaction is shikimate + NADP(+) = 3-dehydroshikimate + NADPH + H(+). Its pathway is metabolic intermediate biosynthesis; chorismate biosynthesis; chorismate from D-erythrose 4-phosphate and phosphoenolpyruvate: step 4/7. Its function is as follows. Involved in the biosynthesis of the chorismate, which leads to the biosynthesis of aromatic amino acids. Catalyzes the reversible NADPH linked reduction of 3-dehydroshikimate (DHSA) to yield shikimate (SA). The polypeptide is Shikimate dehydrogenase (NADP(+)) (Salmonella heidelberg (strain SL476)).